The following is a 237-amino-acid chain: 1-(5-phosphoribosyl)-5-[(5-phosphoribosylamino)methylideneamino] imidazole-4-carboxamide isomerase (237 aa).

D8 (proton acceptor) is an active-site residue. Residue D129 is the Proton donor of the active site.

This sequence belongs to the HisA/HisF family.

It localises to the cytoplasm. The catalysed reaction is 1-(5-phospho-beta-D-ribosyl)-5-[(5-phospho-beta-D-ribosylamino)methylideneamino]imidazole-4-carboxamide = 5-[(5-phospho-1-deoxy-D-ribulos-1-ylimino)methylamino]-1-(5-phospho-beta-D-ribosyl)imidazole-4-carboxamide. It participates in amino-acid biosynthesis; L-histidine biosynthesis; L-histidine from 5-phospho-alpha-D-ribose 1-diphosphate: step 4/9. This is 1-(5-phosphoribosyl)-5-[(5-phosphoribosylamino)methylideneamino] imidazole-4-carboxamide isomerase from Alkaliphilus metalliredigens (strain QYMF).